A 1057-amino-acid polypeptide reads, in one-letter code: Desmoglein-1-alpha (1057 aa).

Positions 1-23 (MDWHSFRIAALLLTSLVVLEVNS) are cleaved as a signal peptide. Residues 24–49 (EFQIQVRDHNAKNGTIKWHSIRRQKR) constitute a propeptide that is removed on maturation. 4 consecutive Cadherin domains span residues 50 to 157 (EWIK…PPVF), 158 to 269 (SMTT…IPYL), 270 to 389 (EQSS…RPGS), and 386 to 493 (RPGS…TGSE). At 50–564 (EWIKFAAACR…LYGDNVHFGP (515 aa)) the chain is on the extracellular side. 2 N-linked (GlcNAc...) asparagine glycosylation sites follow: asparagine 110 and asparagine 180. Residues 490–552 (TGSESGGSSS…FQGDPDETLE (63 aa)) form a disordered region. Positions 510 to 525 (NGYQGTSSTENPQRVT) are enriched in polar residues. A helical transmembrane segment spans residues 565-585 (AGIGLLIMGFLVLGLVPFLLI). Topologically, residues 586–1057 (CCDCGGAPGG…TKYNTVQYSK (472 aa)) are cytoplasmic. Desmoglein repeat repeat units follow at residues 832 to 858 (AYHS…TVRE), 859 to 888 (SYTT…ERVV), 889 to 918 (GPIS…ERVI), 919 to 946 (APGS…ERVI), and 947 to 975 (QPTS…ERVV).

Binds to JUP/plakoglobin. Interacts with PKP2. Interacts with DSC3; there is evidence to suggest that the interaction promotes cell-cell adhesion of keratinocytes. In terms of tissue distribution, expressed in testis.

It localises to the cell membrane. It is found in the cell junction. The protein resides in the desmosome. Its subcellular location is the cytoplasm. The protein localises to the nucleus. Its function is as follows. Component of intercellular desmosome junctions. Involved in the interaction of plaque proteins and intermediate filaments mediating cell-cell adhesion. The sequence is that of Desmoglein-1-alpha (Dsg1a) from Mus musculus (Mouse).